The following is a 180-amino-acid chain: NADH-quinone oxidoreductase subunit I (180 aa).

2 4Fe-4S ferredoxin-type domains span residues 50–80 and 90–119; these read LTRN…LQKS and KFFR…LMPD. [4Fe-4S] cluster contacts are provided by Cys60, Cys63, Cys66, Cys70, Cys99, Cys102, Cys105, and Cys109.

Belongs to the complex I 23 kDa subunit family. In terms of assembly, NDH-1 is composed of 13 different subunits. Subunits NuoA, H, J, K, L, M, N constitute the membrane sector of the complex. It depends on [4Fe-4S] cluster as a cofactor.

Its subcellular location is the cell membrane. The enzyme catalyses a quinone + NADH + 5 H(+)(in) = a quinol + NAD(+) + 4 H(+)(out). Functionally, NDH-1 shuttles electrons from NADH, via FMN and iron-sulfur (Fe-S) centers, to quinones in the respiratory chain. The immediate electron acceptor for the enzyme in this species is believed to be ubiquinone. Couples the redox reaction to proton translocation (for every two electrons transferred, four hydrogen ions are translocated across the cytoplasmic membrane), and thus conserves the redox energy in a proton gradient. The sequence is that of NADH-quinone oxidoreductase subunit I from Buchnera aphidicola subsp. Acyrthosiphon pisum (strain APS) (Acyrthosiphon pisum symbiotic bacterium).